Consider the following 433-residue polypeptide: Glutamyl-tRNA reductase (433 aa).

Residues 49–52, Ser109, 114–116, and Gln120 each bind substrate; these read TCNR and EGQ. The Nucleophile role is filled by Cys50. Residue 189–194 participates in NADP(+) binding; it reads GAGKMS.

It belongs to the glutamyl-tRNA reductase family. As to quaternary structure, homodimer.

The catalysed reaction is (S)-4-amino-5-oxopentanoate + tRNA(Glu) + NADP(+) = L-glutamyl-tRNA(Glu) + NADPH + H(+). It functions in the pathway porphyrin-containing compound metabolism; protoporphyrin-IX biosynthesis; 5-aminolevulinate from L-glutamyl-tRNA(Glu): step 1/2. The protein operates within porphyrin-containing compound metabolism; chlorophyll biosynthesis. Catalyzes the NADPH-dependent reduction of glutamyl-tRNA(Glu) to glutamate 1-semialdehyde (GSA). This is Glutamyl-tRNA reductase from Acaryochloris marina (strain MBIC 11017).